The sequence spans 265 residues: Hydroxyethylthiazole kinase (265 aa).

Substrate is bound at residue Met-43. Arg-119 and Ser-165 together coordinate ATP. Ala-192 contacts substrate.

The protein belongs to the Thz kinase family. Requires Mg(2+) as cofactor.

The catalysed reaction is 5-(2-hydroxyethyl)-4-methylthiazole + ATP = 4-methyl-5-(2-phosphooxyethyl)-thiazole + ADP + H(+). It participates in cofactor biosynthesis; thiamine diphosphate biosynthesis; 4-methyl-5-(2-phosphoethyl)-thiazole from 5-(2-hydroxyethyl)-4-methylthiazole: step 1/1. In terms of biological role, catalyzes the phosphorylation of the hydroxyl group of 4-methyl-5-beta-hydroxyethylthiazole (THZ). The chain is Hydroxyethylthiazole kinase from Haemophilus influenzae (strain ATCC 51907 / DSM 11121 / KW20 / Rd).